Reading from the N-terminus, the 426-residue chain is Serine--tRNA ligase (426 aa).

The segment covering 1–15 has biased composition (basic and acidic residues); sequence MIDVKDLSENPDKFR. The tract at residues 1-20 is disordered; sequence MIDVKDLSENPDKFRASQRA. An L-serine-binding site is contributed by 228 to 230; that stretch reads TSE. Residues 259–261 and V275 each bind ATP; that span reads RRE. E282 contributes to the L-serine binding site. ATP is bound at residue 346–349; sequence ELTS. T386 contacts L-serine.

This sequence belongs to the class-II aminoacyl-tRNA synthetase family. Type-1 seryl-tRNA synthetase subfamily. As to quaternary structure, homodimer. The tRNA molecule binds across the dimer.

The protein resides in the cytoplasm. The catalysed reaction is tRNA(Ser) + L-serine + ATP = L-seryl-tRNA(Ser) + AMP + diphosphate + H(+). It catalyses the reaction tRNA(Sec) + L-serine + ATP = L-seryl-tRNA(Sec) + AMP + diphosphate + H(+). It functions in the pathway aminoacyl-tRNA biosynthesis; selenocysteinyl-tRNA(Sec) biosynthesis; L-seryl-tRNA(Sec) from L-serine and tRNA(Sec): step 1/1. Catalyzes the attachment of serine to tRNA(Ser). Is also able to aminoacylate tRNA(Sec) with serine, to form the misacylated tRNA L-seryl-tRNA(Sec), which will be further converted into selenocysteinyl-tRNA(Sec). This chain is Serine--tRNA ligase, found in Paenarthrobacter aurescens (strain TC1).